The primary structure comprises 312 residues: uncharacterized protein (312 aa).

The protein belongs to the mimivirus R69 family.

This is an uncharacterized protein from Acanthamoeba polyphaga mimivirus (APMV).